The following is a 278-amino-acid chain: Sulfur carrier protein FdhD (278 aa).

The active-site Cysteine persulfide intermediate is Cys-121. 260–265 serves as a coordination point for Mo-bis(molybdopterin guanine dinucleotide); it reads FCKPGR.

The protein belongs to the FdhD family.

It is found in the cytoplasm. Required for formate dehydrogenase (FDH) activity. Acts as a sulfur carrier protein that transfers sulfur from IscS to the molybdenum cofactor prior to its insertion into FDH. In Salmonella newport (strain SL254), this protein is Sulfur carrier protein FdhD.